The sequence spans 214 residues: Adenylate kinase (214 aa).

10–15 (GAGKGT) lines the ATP pocket. Residues 30–59 (STGDILRAAVKDMTPMGGKAKSFMDAGALV) form an NMP region. Residues threonine 31, arginine 36, 57–59 (ALV), 85–88 (GFPR), and glutamine 92 each bind AMP. The interval 126–163 (GRRTCRNCGKGFHVSFDPPKSSGICDECSGELYQRDDD) is LID. Residue arginine 127 coordinates ATP. Zn(2+) contacts are provided by cysteine 130, cysteine 133, cysteine 150, and cysteine 153. Arginine 160 and arginine 171 together coordinate AMP. Glycine 199 provides a ligand contact to ATP.

The protein belongs to the adenylate kinase family. Monomer.

The protein localises to the cytoplasm. It carries out the reaction AMP + ATP = 2 ADP. It participates in purine metabolism; AMP biosynthesis via salvage pathway; AMP from ADP: step 1/1. Its function is as follows. Catalyzes the reversible transfer of the terminal phosphate group between ATP and AMP. Plays an important role in cellular energy homeostasis and in adenine nucleotide metabolism. The polypeptide is Adenylate kinase (Geotalea daltonii (strain DSM 22248 / JCM 15807 / FRC-32) (Geobacter daltonii)).